The sequence spans 105 residues: Large ribosomal subunit protein uL24 (105 aa).

It belongs to the universal ribosomal protein uL24 family. As to quaternary structure, part of the 50S ribosomal subunit.

In terms of biological role, one of two assembly initiator proteins, it binds directly to the 5'-end of the 23S rRNA, where it nucleates assembly of the 50S subunit. One of the proteins that surrounds the polypeptide exit tunnel on the outside of the subunit. This Methylococcus capsulatus (strain ATCC 33009 / NCIMB 11132 / Bath) protein is Large ribosomal subunit protein uL24.